We begin with the raw amino-acid sequence, 293 residues long: Elongation factor Ts (293 aa).

Residues 80-83 (TDFV) are involved in Mg(2+) ion dislocation from EF-Tu.

The protein belongs to the EF-Ts family.

The protein resides in the cytoplasm. In terms of biological role, associates with the EF-Tu.GDP complex and induces the exchange of GDP to GTP. It remains bound to the aminoacyl-tRNA.EF-Tu.GTP complex up to the GTP hydrolysis stage on the ribosome. In Aeromonas hydrophila subsp. hydrophila (strain ATCC 7966 / DSM 30187 / BCRC 13018 / CCUG 14551 / JCM 1027 / KCTC 2358 / NCIMB 9240 / NCTC 8049), this protein is Elongation factor Ts.